The chain runs to 72 residues: Small ribosomal subunit protein bS20 (72 aa).

The protein belongs to the bacterial ribosomal protein bS20 family.

Its function is as follows. Binds directly to 16S ribosomal RNA. The protein is Small ribosomal subunit protein bS20 (rpsT) of Aeromonas hydrophila.